The following is a 427-amino-acid chain: D-inositol 3-phosphate glycosyltransferase 2 (427 aa).

His-14 contacts 1D-myo-inositol 3-phosphate. UDP-N-acetyl-alpha-D-glucosamine-binding positions include 20–21 and Gly-28; that span reads QP. 1D-myo-inositol 3-phosphate is bound by residues 25-30, Lys-83, Tyr-116, Thr-140, and Arg-160; that span reads DAGGMN. Residues Arg-234, Lys-239, and Val-300 each contribute to the UDP-N-acetyl-alpha-D-glucosamine site. Mg(2+) contacts are provided by Tyr-309, Arg-310, and Ala-312. UDP-N-acetyl-alpha-D-glucosamine contacts are provided by Glu-322 and Glu-330. Thr-336 contributes to the Mg(2+) binding site.

The protein belongs to the glycosyltransferase group 1 family. MshA subfamily. In terms of assembly, homodimer.

It carries out the reaction 1D-myo-inositol 3-phosphate + UDP-N-acetyl-alpha-D-glucosamine = 1D-myo-inositol 2-acetamido-2-deoxy-alpha-D-glucopyranoside 3-phosphate + UDP + H(+). Catalyzes the transfer of a N-acetyl-glucosamine moiety to 1D-myo-inositol 3-phosphate to produce 1D-myo-inositol 2-acetamido-2-deoxy-glucopyranoside 3-phosphate in the mycothiol biosynthesis pathway. The chain is D-inositol 3-phosphate glycosyltransferase 2 from Catenulispora acidiphila (strain DSM 44928 / JCM 14897 / NBRC 102108 / NRRL B-24433 / ID139908).